Here is a 299-residue protein sequence, read N- to C-terminus: Trans-aconitate 3-methyltransferase (299 aa).

At Ser-2 the chain carries N-acetylserine.

It belongs to the methyltransferase superfamily. Tam family.

It localises to the cytoplasm. The enzyme catalyses trans-aconitate + S-adenosyl-L-methionine = (E)-2-(methoxycarbonylmethyl)but-2-enedioate + S-adenosyl-L-homocysteine. In terms of biological role, catalyzes the S-adenosylmethionine monomethyl esterification of trans-aconitate and 3-isopropylmalate at high affinity and of other molecules like cis-aconitate, isocitrate, and citrate at lower velocities and affinities. The function of trans-aconitate methylation appears to be in reducing the toxicity of this spontaneous breakdown product of cis-aconitate. The role of 3-isopropylmalate methylation is unclear but may represent a metabolic branch at 3-isopropylmalate, where some of the material is taken in the pathway leading to leucine and some is taken in a pathway to the 3-isopropylmalate methyl ester, a molecule that provides a signal to switch from vegetative to invasive growth in response to amino acid starvation. The chain is Trans-aconitate 3-methyltransferase (TMT1) from Saccharomyces cerevisiae (strain ATCC 204508 / S288c) (Baker's yeast).